The sequence spans 69 residues: Putative membrane protein insertion efficiency factor (69 aa).

This sequence belongs to the UPF0161 family.

It localises to the cell membrane. Its function is as follows. Could be involved in insertion of integral membrane proteins into the membrane. The polypeptide is Putative membrane protein insertion efficiency factor (Thermomicrobium roseum (strain ATCC 27502 / DSM 5159 / P-2)).